Here is a 283-residue protein sequence, read N- to C-terminus: Putative UTP--glucose-1-phosphate uridylyltransferase (283 aa).

Belongs to the UDPGP type 2 family.

It carries out the reaction alpha-D-glucose 1-phosphate + UTP + H(+) = UDP-alpha-D-glucose + diphosphate. In Methanocaldococcus jannaschii (strain ATCC 43067 / DSM 2661 / JAL-1 / JCM 10045 / NBRC 100440) (Methanococcus jannaschii), this protein is Putative UTP--glucose-1-phosphate uridylyltransferase.